The sequence spans 375 residues: L-asparaginase 2 (375 aa).

Residues 1-19 (MKKQRMLVLFTALLFVFTG) form the signal peptide. Residues 22–46 (HSPETKESPKEKAQTQKVSSASASE) are disordered. Residues 24–35 (PETKESPKEKAQ) show a composition bias toward basic and acidic residues. In terms of domain architecture, Asparaginase/glutaminase spans 51–375 (PNIRILATGG…QKIQAYFNEY (325 aa)). Residue Thr-61 is the O-isoaspartyl threonine intermediate of the active site. Substrate contacts are provided by residues Ser-108 and 141–142 (TD).

It belongs to the asparaginase 1 family. As to quaternary structure, homotetramer.

The enzyme catalyses L-asparagine + H2O = L-aspartate + NH4(+). Its function is as follows. Catalyzes the conversion of L-asparagine to L-aspartate and ammonium. This Bacillus subtilis (strain 168) protein is L-asparaginase 2 (ansZ).